The chain runs to 68 residues: Large ribosomal subunit protein bL35 (68 aa).

Composition is skewed to basic residues over residues 1–15 (MPKM…KRFK) and 23–38 (TARK…HKSS). The disordered stretch occupies residues 1–38 (MPKMKSHSGTKKRFKVTGSGKVTARKAGKRHLNEHKSS).

It belongs to the bacterial ribosomal protein bL35 family.

The protein is Large ribosomal subunit protein bL35 of Cutibacterium acnes (strain DSM 16379 / KPA171202) (Propionibacterium acnes).